Reading from the N-terminus, the 146-residue chain is Basic phospholipase A2 paradoxin-like alpha chain (146 aa).

A signal peptide spans 1 to 27 (MHPAHLLVLLAVCVSLLGASDIPPLPL). 7 cysteine pairs are disulfide-bonded: Cys-38–Cys-99, Cys-54–Cys-145, Cys-56–Cys-72, Cys-71–Cys-126, Cys-78–Cys-119, Cys-88–Cys-112, and Cys-106–Cys-117. 3 residues coordinate Ca(2+): Tyr-55, Gly-57, and Gly-59. His-75 is a catalytic residue. Asp-76 provides a ligand contact to Ca(2+). The active site involves Asp-120.

It belongs to the phospholipase A2 family. Group I subfamily. D49 sub-subfamily. In terms of assembly, heterotrimer of alpha, beta, and gamma chains; non-covalently linked. Ca(2+) is required as a cofactor. As to expression, expressed by the venom gland.

It is found in the secreted. It catalyses the reaction a 1,2-diacyl-sn-glycero-3-phosphocholine + H2O = a 1-acyl-sn-glycero-3-phosphocholine + a fatty acid + H(+). Its function is as follows. Heterotrimer: Snake venom phospholipase A2 (PLA2) heterotrimer that acts as a potent presynaptic neurotoxin by blocking synaptic transmission and synaptic vesicle recycling. May act by binding in a calcium-dependent fashion to neurotonal pentraxin-1 (NPTX1) and neurotonal pentraxin-2 (NPTX2), but not to neuronal pentraxin receptor (NPTXR). Also binds to taipoxin-associated calcium binding protein 49 (RCN2), a protein localized in the lumen of endoplasmic reticulum. Functionally, monomer (alpha chain): Snake venom phospholipase A2 (PLA2) alpha chain that possesses the same high enzymatic activity than the heterotrimer. PLA2 catalyzes the calcium-dependent hydrolysis of the 2-acyl groups in 3-sn-phosphoglycerides. This Oxyuranus microlepidotus (Inland taipan) protein is Basic phospholipase A2 paradoxin-like alpha chain.